Consider the following 649-residue polypeptide: Threonine--tRNA ligase (649 aa).

The TGS domain occupies methionine 1–threonine 60. The interval aspartate 248–proline 544 is catalytic. Zn(2+) contacts are provided by cysteine 341, histidine 392, and histidine 521.

It belongs to the class-II aminoacyl-tRNA synthetase family. In terms of assembly, homodimer. The cofactor is Zn(2+).

The protein resides in the cytoplasm. It catalyses the reaction tRNA(Thr) + L-threonine + ATP = L-threonyl-tRNA(Thr) + AMP + diphosphate + H(+). Functionally, catalyzes the attachment of threonine to tRNA(Thr) in a two-step reaction: L-threonine is first activated by ATP to form Thr-AMP and then transferred to the acceptor end of tRNA(Thr). Also edits incorrectly charged L-seryl-tRNA(Thr). The chain is Threonine--tRNA ligase from Deinococcus deserti (strain DSM 17065 / CIP 109153 / LMG 22923 / VCD115).